The following is a 247-amino-acid chain: Putative 2-succinyl-6-hydroxy-2,4-cyclohexadiene-1-carboxylate synthase (247 aa).

The region spanning 4–229 (IIFLHGLLGT…CAGHNSHLEN (226 aa)) is the AB hydrolase-1 domain.

Belongs to the AB hydrolase superfamily. MenH family. In terms of assembly, monomer.

The catalysed reaction is 5-enolpyruvoyl-6-hydroxy-2-succinyl-cyclohex-3-ene-1-carboxylate = (1R,6R)-6-hydroxy-2-succinyl-cyclohexa-2,4-diene-1-carboxylate + pyruvate. It functions in the pathway quinol/quinone metabolism; 1,4-dihydroxy-2-naphthoate biosynthesis; 1,4-dihydroxy-2-naphthoate from chorismate: step 3/7. The protein operates within quinol/quinone metabolism; menaquinone biosynthesis. Functionally, catalyzes a proton abstraction reaction that results in 2,5-elimination of pyruvate from 2-succinyl-5-enolpyruvyl-6-hydroxy-3-cyclohexene-1-carboxylate (SEPHCHC) and the formation of 2-succinyl-6-hydroxy-2,4-cyclohexadiene-1-carboxylate (SHCHC). The sequence is that of Putative 2-succinyl-6-hydroxy-2,4-cyclohexadiene-1-carboxylate synthase from Haemophilus influenzae (strain ATCC 51907 / DSM 11121 / KW20 / Rd).